Here is a 1935-residue protein sequence, read N- to C-terminus: MVDAEMAAFGEAAPYLRKSEKERLEAQTRPFDLKKDVFVPDDKEEFVKATILSREGGKVTAETEHGKTVTVKEDQVLQQNPPKFDKIEDMAMLTFLHEPAVLYNLKERYASWMIYTYSGLFCVTINPYKWLPVYNAEVVAAYRGKKRSEAPPHIFSISDNAYQYMLTDRENQSILITGESGAGKTVNTKRVIQYFAVIAAIGDRSKKEQATGKGTLEDQIIQANPALEAFGNAKTVRNDNSSRFGKFIRIHFGATGKLASADIETYLLEKSRVIFQLKAERDYHIFYQILSNKKPELLDMLLITNNPYDYAFISQGETTVASIDDAEELMATDNAFDVLGFTTEEKNSMYKLTGAIMHFGNMKFKLKQREEQAEPDGTEEADKSAYLMGLNSADLLKGLCHPRVKVGNEYVTKGQNVQQVVYAKGALAKAVYERMFNWMVTRINATLETKQPRQYFIGVLDIAGFEIFDFNSFEQLCINFTNEKLQQFFNHHMFVLEQEEYKKEGIEWEFIDFGMDLQACIDLIEKPMGIMSILEEECMFPKATDMTFKAKLFDNHLGKSSNFQKPRNIKGKPEAHFSLIHYAGTVDYNIIGWLQKNKDPLNETVVDLYKKSSLKMLSSLFANYAGFDTPIEKGKGKAKKGSSFQTVSALHRENLNKLMTNLRSTHPHFVRCIIPNETKSPGVIDNPLVMHQLRCNGVLEGIRICRKGFPNRILYGDFRQRYRILNPAAIPEGQFIDSRKGAEKLLGSLDIDHNQYKFGHTKVFFKAGLLGLLEEMRDERLSRIITRIQAQSRGVLSRMEFKKLLERRDSLLIIQWNIRAFMGVKNWPWMKLYFKIKPLLKSAETEKEIALMKEEFGRLKEALEKSEARRKELEEKMVSLLQEKNDLQLQVQAEQDNLADAEERCDQLIKNKIQLEAKVKEMTERLEDEEEMNAELTAKKRKLEDECSELKRDIDDLELTLAKVEKEKHATENKVKNLTEEMAGLDEIIAKLTKEKKALQEAHQQALDDLQAEEDKVNTLTKAKVKLEQHVDDLEGSLEQEKKVRMDLERAKRKLEGDLKLTQESIMDLENDKQQLDERLKKKDFELNALNARIEDEQALGSQLQKKLKELQARIEELEEELEAERTARAKVEKLRSDLSRELEEISERLEEAGGATSVQIEMNKKREAEFQKMRRDLEEATLQHEATAAALRKKHADSVAELSEQIDNLQRVKQKLEKEKSEFKLELDDVTSNMEQIIKAKANLEKMCRTLEDQMNEHRSKAEETQRSVNDLTSQRAKLQTENGELSRQLDEKEALISQLTRGKLTYTQQLEDLKRQLEEEVKAKNALAHALQSARHDCDLLREQYEEETEAKAELQRVLSKANSEVAQWRTKYETDAIQRTEELEEAKKKLAQRLQDAEEAVEAVNAKCSSLEKTKHRLQNEIEDLMVDVERSNAAAAALDKKQRNFDKILAEWKQKYEESQSELESSQKEARSLSTELFKLKNAYEESLEHLETFKRENKNLQEEISDLTEQLGSSGKTIHELEKVRKQLEAEKLELQSALEEAEASLEQEEGKILRAQLEFNQIKAEMERKLAEKDEEMEQAKRNHLRVVDSLQTSLDAETRSRNEALRVKKKMEGDLNEMEIQLSHANRLAAEAQKQVKSLQSLLKDTQIQLDDAVRANDDLKENIAIVERRNNLLQAELEELRAVVEQTERSRKLAEQELIETSERVQLLHSQNTSLINQKKKMEADLSQLQTEVEEAVQECRNAEEKAKKAITDAAMMAEELKKEQDTSAHLERMKKNMEQTIKDLQHRLDEAEQIALKGGKKQLQKLEARVRELENELEAEQKRNAESVKGMRKSERRIKELTYQTEEDRKNLLRLQDLVDKLQLKVKAYKRQAEEAEEQANTNLSKFRKVQHELDEAEERADIAESQVNKLRAKSRDIGTKGLNEE.

The Myosin N-terminal SH3-like domain occupies 32-81; it reads DLKKDVFVPDDKEEFVKATILSREGGKVTAETEHGKTVTVKEDQVLQQNP. The Myosin motor domain occupies 85-778; the sequence is DKIEDMAMLT…LLGLLEEMRD (694 aa). An N6,N6,N6-trimethyllysine modification is found at K129. Residue 178–185 coordinates ATP; it reads GESGAGKT. The residue at position 378 (T378) is a Phosphothreonine. Actin-binding regions lie at residues 655–677 and 757–771; these read LNKLMTNLRSTHPHFVRCIIPNE and KFGHTKVFFKAGLLG. One can recognise an IQ domain in the interval 781–810; that stretch reads LSRIITRIQAQSRGVLSRMEFKKLLERRDS. Residues 839–1935 adopt a coiled-coil conformation; it reads LLKSAETEKE…DIGTKGLNEE (1097 aa). 2 positions are modified to phosphoserine: S1137 and S1269. T1282 bears the Phosphothreonine mark. Y1308 is subject to Phosphotyrosine. T1309 is subject to Phosphothreonine. S1510 is modified (phosphoserine). T1513 bears the Phosphothreonine mark. Residues 1907 to 1935 are disordered; sequence EERADIAESQVNKLRAKSRDIGTKGLNEE. A compositionally biased stretch (basic and acidic residues) spans 1923 to 1935; that stretch reads KSRDIGTKGLNEE.

It belongs to the TRAFAC class myosin-kinesin ATPase superfamily. Myosin family. Muscle myosin is a hexameric protein that consists of 2 heavy chain subunits (MHC), 2 alkali light chain subunits (MLC) and 2 regulatory light chain subunits (MLC-2). Interacts with ECPAS. Interacts (via C-terminus) with LRRC39.

It localises to the cytoplasm. The protein resides in the myofibril. It is found in the sarcomere. Myosins are actin-based motor molecules with ATPase activity essential for muscle contraction. Forms regular bipolar thick filaments that, together with actin thin filaments, constitute the fundamental contractile unit of skeletal and cardiac muscle. In Bos taurus (Bovine), this protein is Myosin-7 (MYH7).